Here is a 347-residue protein sequence, read N- to C-terminus: UDP-N-acetylenolpyruvoylglucosamine reductase (347 aa).

The FAD-binding PCMH-type domain occupies 16–187; that stretch reads AIEQCSHYLV…IAVGLKLPKT (172 aa). Arg-163 is a catalytic residue. Ser-233 serves as the catalytic Proton donor. The active site involves Glu-328.

This sequence belongs to the MurB family. The cofactor is FAD.

The protein resides in the cytoplasm. It catalyses the reaction UDP-N-acetyl-alpha-D-muramate + NADP(+) = UDP-N-acetyl-3-O-(1-carboxyvinyl)-alpha-D-glucosamine + NADPH + H(+). It participates in cell wall biogenesis; peptidoglycan biosynthesis. Functionally, cell wall formation. This is UDP-N-acetylenolpyruvoylglucosamine reductase from Vibrio vulnificus (strain CMCP6).